The primary structure comprises 1467 residues: Neuropathy target esterase sws (1467 aa).

At 1 to 34 (MDVLEMLRASASGSYNTIFSDAWCQYVSKQITAT) the chain is on the lumenal side. Residues 35–55 (MYMYCAFGLMGVLFLAWFMYF) traverse the membrane as a helical segment. Over 56 to 1467 (KRLARLRLRD…RSSTYNETKN (1412 aa)) the chain is Cytoplasmic. 174-301 (IFGHFEKPIF…IRVIQVIMIR (128 aa)) contacts a nucleoside 3',5'-cyclic phosphate. Disordered stretches follow at residues 332–353 (TMSGPINSQTSQSSRQATANGP) and 372–416 (MGMG…SVHG). Low complexity predominate over residues 339–350 (SQTSQSSRQATA). 2 positions are modified to phosphoserine: Ser-450 and Ser-459. A nucleoside 3',5'-cyclic phosphate-binding positions include 488–615 (ELGL…VVRR) and 604–731 (IVLD…LSHR). The PNPLA domain maps to 958-1124 (LVLGGGGARG…VNNLPGHLWR (167 aa)). The GXGXXG signature appears at 962–967 (GGGARG). The GXSXG signature appears at 989-993 (GVSIG). Catalysis depends on Ser-991, which acts as the Nucleophile. The active-site Proton acceptor is Asp-1111. The DGA/G signature appears at 1111-1113 (DGG). At Ser-1205 the chain carries Phosphoserine. The tract at residues 1377–1467 (RKMDKSTQST…RSSTYNETKN (91 aa)) is disordered. Residues 1382 to 1393 (STQSTPPTSSRA) are compositionally biased toward polar residues. 2 stretches are compositionally biased toward basic and acidic residues: residues 1396–1406 (RGKEEARHMDN) and 1448–1458 (LADKDEDKENR).

The protein belongs to the NTE family. Interacts with Pka-C3; interaction inhibits the catalytic function of Pka-C3 and the esterase activity of sws.

The protein localises to the endoplasmic reticulum membrane. The catalysed reaction is a 1-acyl-sn-glycero-3-phosphocholine + H2O = sn-glycerol 3-phosphocholine + a fatty acid + H(+). Functionally, phospholipase B that deacylates intracellular phosphatidylcholine (PtdCho), generating glycerophosphocholine (GroPtdCho). This deacylation occurs at both sn-2 and sn-1 positions of PtdCho. Its specific chemical modification by certain organophosphorus (OP) compounds leads to distal axonopathy. Plays a role in the signaling mechanism between neurons and glia that regulates glia wrapping during development of the adult brain. Essential for membrane lipid homeostasis and cell survival in both neurons and glia of the adult brain. In Drosophila yakuba (Fruit fly), this protein is Neuropathy target esterase sws.